The chain runs to 343 residues: Ribonucleoside-diphosphate reductase small subunit (343 aa).

Residues Asp101, Glu131, and His134 each contribute to the Fe cation site. The active site involves Tyr138. Residues 188-208 form a helical membrane-spanning segment; the sequence is ILMILIEGIFFSASFAAIAYL. 3 residues coordinate Fe cation: Glu194, Glu228, and His231.

It belongs to the ribonucleoside diphosphate reductase small chain family. As to quaternary structure, heterotetramer composed of a homodimer of the large subunit (R1) and a homodimer of the small subunit (R2). Larger multisubunit protein complex are also active, composed of (R1)n(R2)n. Fe cation serves as cofactor.

Its subcellular location is the host membrane. It carries out the reaction a 2'-deoxyribonucleoside 5'-diphosphate + [thioredoxin]-disulfide + H2O = a ribonucleoside 5'-diphosphate + [thioredoxin]-dithiol. Its function is as follows. Ribonucleoside-diphosphate reductase holoenzyme provides the precursors necessary for viral DNA synthesis. Allows virus growth in non-dividing cells, as well as reactivation from latency in infected hosts. Catalyzes the biosynthesis of deoxyribonucleotides from the corresponding ribonucleotides. The protein is Ribonucleoside-diphosphate reductase small subunit of Gallid herpesvirus 2 (strain Chicken/Md5/ATCC VR-987) (GaHV-2).